A 189-amino-acid chain; its full sequence is Nucleoside triphosphate pyrophosphatase (189 aa).

Aspartate 70 acts as the Proton acceptor in catalysis.

This sequence belongs to the Maf family. A divalent metal cation is required as a cofactor.

Its subcellular location is the cytoplasm. The catalysed reaction is a ribonucleoside 5'-triphosphate + H2O = a ribonucleoside 5'-phosphate + diphosphate + H(+). It carries out the reaction a 2'-deoxyribonucleoside 5'-triphosphate + H2O = a 2'-deoxyribonucleoside 5'-phosphate + diphosphate + H(+). Its function is as follows. Nucleoside triphosphate pyrophosphatase. May have a dual role in cell division arrest and in preventing the incorporation of modified nucleotides into cellular nucleic acids. In Xylella fastidiosa (strain M23), this protein is Nucleoside triphosphate pyrophosphatase.